The sequence spans 319 residues: Homeobox protein Hox-B5a (319 aa).

A disordered region spans residues 114 to 224; it reads SLLSPGSGDT…NTVGSEGQPP (111 aa). The span at 128 to 155 shows a compositional bias: low complexity; it reads RSSSPRSEQSGSGNLSSTNLSSSTNISS. An Antp-type hexapeptide motif is present at residues 226 to 231; it reads IFPWMR. Positions 244–303 form a DNA-binding region, homeobox; that stretch reads GKRARTAYTRYQTLELEKEFHFNRYLTRRRRIEIAHALCLTERQIKIWFQNRRMKWKKDN.

It belongs to the Antp homeobox family.

The protein resides in the nucleus. Functionally, sequence-specific transcription factor which is part of a developmental regulatory system that provides cells with specific positional identities on the anterior-posterior axis. This Takifugu rubripes (Japanese pufferfish) protein is Homeobox protein Hox-B5a (hoxb5a).